The chain runs to 509 residues: Glycogen synthase (509 aa).

Residue K47 participates in ADP-alpha-D-glucose binding.

The protein belongs to the glycosyltransferase 1 family. Bacterial/plant glycogen synthase subfamily.

The enzyme catalyses [(1-&gt;4)-alpha-D-glucosyl](n) + ADP-alpha-D-glucose = [(1-&gt;4)-alpha-D-glucosyl](n+1) + ADP + H(+). It functions in the pathway glycan biosynthesis; glycogen biosynthesis. Functionally, synthesizes alpha-1,4-glucan chains using ADP-glucose. The polypeptide is Glycogen synthase (Xanthomonas oryzae pv. oryzae (strain MAFF 311018)).